Consider the following 252-residue polypeptide: N-glycosylase/DNA lyase (252 aa).

8-oxoguanine-binding residues include glutamine 32, serine 60, and tryptophan 71. The interval 129–193 (KTYYSDMEKL…KDSRIEKYTL (65 aa)) is helix-hairpin-helix. Lysine 153 serves as the catalytic Schiff-base intermediate with DNA. Positions 157 and 183 each coordinate 8-oxoguanine. Aspartate 185 is an active-site residue. Positions 219 and 223 each coordinate 8-oxoguanine.

Belongs to the archaeal N-glycosylase/DNA lyase (AGOG) family.

The enzyme catalyses 2'-deoxyribonucleotide-(2'-deoxyribose 5'-phosphate)-2'-deoxyribonucleotide-DNA = a 3'-end 2'-deoxyribonucleotide-(2,3-dehydro-2,3-deoxyribose 5'-phosphate)-DNA + a 5'-end 5'-phospho-2'-deoxyribonucleoside-DNA + H(+). Its function is as follows. DNA repair enzyme that is part of the base excision repair (BER) pathway; protects from oxidative damage by removing the major product of DNA oxidation, 8-oxoguanine (GO), from single- and double-stranded DNA substrates. The sequence is that of N-glycosylase/DNA lyase from Methanococcus maripaludis (strain DSM 14266 / JCM 13030 / NBRC 101832 / S2 / LL).